The sequence spans 600 residues: Glutamine--fructose-6-phosphate aminotransferase [isomerizing] (600 aa).

Cysteine 2 acts as the Nucleophile; for GATase activity in catalysis. The Glutamine amidotransferase type-2 domain occupies 2–217; it reads CGIVGYIGNE…DEELVIVRRD (216 aa). SIS domains follow at residues 283 to 422 and 452 to 590; these read IRAA…AAGK and IARD…VDKP. Lysine 595 functions as the For Fru-6P isomerization activity in the catalytic mechanism.

In terms of assembly, homodimer.

It is found in the cytoplasm. The catalysed reaction is D-fructose 6-phosphate + L-glutamine = D-glucosamine 6-phosphate + L-glutamate. In terms of biological role, catalyzes the first step in hexosamine metabolism, converting fructose-6P into glucosamine-6P using glutamine as a nitrogen source. The sequence is that of Glutamine--fructose-6-phosphate aminotransferase [isomerizing] from Shouchella clausii (strain KSM-K16) (Alkalihalobacillus clausii).